Reading from the N-terminus, the 270-residue chain is Phosphonoacetaldehyde hydrolase (270 aa).

Aspartate 11 (nucleophile) is an active-site residue. Mg(2+) contacts are provided by aspartate 11 and alanine 13. Lysine 53 acts as the Schiff-base intermediate with substrate in catalysis. Aspartate 187 contacts Mg(2+).

It belongs to the HAD-like hydrolase superfamily. PhnX family. In terms of assembly, homodimer. The cofactor is Mg(2+).

The catalysed reaction is phosphonoacetaldehyde + H2O = acetaldehyde + phosphate + H(+). Functionally, involved in phosphonate degradation. This Salmonella gallinarum (strain 287/91 / NCTC 13346) protein is Phosphonoacetaldehyde hydrolase.